A 394-amino-acid chain; its full sequence is Putative F-box protein At5g66830 (394 aa).

The F-box domain occupies 17–63 (DWCWSKLPSDLMQFVFDRLGFADFQRAKSVCSSWLSVSRNSQPNNQI).

This is Putative F-box protein At5g66830 from Arabidopsis thaliana (Mouse-ear cress).